A 470-amino-acid chain; its full sequence is 4-O-methyltransferase 1 (470 aa).

S-adenosyl-L-methionine is bound by residues 274–275, D297, 328–329, and K344; these read GG and DC. The active-site Proton acceptor is H348.

It belongs to the class I-like SAM-binding methyltransferase superfamily. Cation-independent O-methyltransferase family. COMT subfamily.

Its function is as follows. S-adenosyl-L-methionine-dependent methyltransferase that preferentially catalyzes the methylation of 4-OH phenolic compounds like coniferyl alcohol, vanillyl alcohol and ferrulic acid. May play a role in promoting lignin degradation by methylating and inactivating free-hydroxyl phenolic compounds, products of lignin cleavage which are known inhibitors of lignin peroxidases. The chain is 4-O-methyltransferase 1 from Phanerochaete chrysosporium (strain RP-78 / ATCC MYA-4764 / FGSC 9002) (White-rot fungus).